Reading from the N-terminus, the 209-residue chain is ATP-dependent Clp protease proteolytic subunit (209 aa).

Serine 103 serves as the catalytic Nucleophile. The active site involves histidine 128.

It belongs to the peptidase S14 family. Fourteen ClpP subunits assemble into 2 heptameric rings which stack back to back to give a disk-like structure with a central cavity, resembling the structure of eukaryotic proteasomes.

Its subcellular location is the cytoplasm. It catalyses the reaction Hydrolysis of proteins to small peptides in the presence of ATP and magnesium. alpha-casein is the usual test substrate. In the absence of ATP, only oligopeptides shorter than five residues are hydrolyzed (such as succinyl-Leu-Tyr-|-NHMec, and Leu-Tyr-Leu-|-Tyr-Trp, in which cleavage of the -Tyr-|-Leu- and -Tyr-|-Trp bonds also occurs).. Functionally, cleaves peptides in various proteins in a process that requires ATP hydrolysis. Has a chymotrypsin-like activity. Plays a major role in the degradation of misfolded proteins. The protein is ATP-dependent Clp protease proteolytic subunit of Lawsonia intracellularis (strain PHE/MN1-00).